Here is a 256-residue protein sequence, read N- to C-terminus: Alcohol dehydrogenase (256 aa).

12 to 41 is an NAD(+) binding site; that stretch reads FVAGLGGIGLDTTKELLKRDLKNLVILDRI. Ser140 contacts substrate. The active-site Proton acceptor is the Tyr153.

It belongs to the short-chain dehydrogenases/reductases (SDR) family. Homodimer.

The enzyme catalyses a primary alcohol + NAD(+) = an aldehyde + NADH + H(+). The catalysed reaction is a secondary alcohol + NAD(+) = a ketone + NADH + H(+). This is Alcohol dehydrogenase from Drosophila ananassae (Fruit fly).